The primary structure comprises 399 residues: Elongation factor Tu (399 aa).

The region spanning Lys10–Glu204 is the tr-type G domain. Residues Gly19–Thr26 form a G1 region. Residue Gly19–Thr26 participates in GTP binding. Residue Thr26 coordinates Mg(2+). Residues Gly60–Asn64 form a G2 region. Residues Asp81–Gly84 form a G3 region. GTP is bound by residues Asp81–His85 and Asn136–Asp139. A G4 region spans residues Asn136–Asp139. A G5 region spans residues Ser174–Leu176.

It belongs to the TRAFAC class translation factor GTPase superfamily. Classic translation factor GTPase family. EF-Tu/EF-1A subfamily. In terms of assembly, monomer.

The protein localises to the cytoplasm. It carries out the reaction GTP + H2O = GDP + phosphate + H(+). In terms of biological role, GTP hydrolase that promotes the GTP-dependent binding of aminoacyl-tRNA to the A-site of ribosomes during protein biosynthesis. This chain is Elongation factor Tu, found in Prochlorococcus marinus (strain MIT 9303).